Reading from the N-terminus, the 503-residue chain is 2-isopropylmalate synthase (503 aa).

Mn(2+) is bound by residues Asp-1, His-189, His-191, and Asn-225. In terms of domain architecture, Pyruvate carboxyltransferase spans 1 to 254; sequence DGEQALQASL…STNINHKEIY (254 aa). The tract at residues 379–503 is regulatory domain; sequence SLKFFSVQSI…NKNLKNLKKQ (125 aa).

This sequence belongs to the alpha-IPM synthase/homocitrate synthase family. LeuA type 1 subfamily. In terms of assembly, homodimer. Mn(2+) is required as a cofactor.

The protein resides in the cytoplasm. The catalysed reaction is 3-methyl-2-oxobutanoate + acetyl-CoA + H2O = (2S)-2-isopropylmalate + CoA + H(+). It functions in the pathway amino-acid biosynthesis; L-leucine biosynthesis; L-leucine from 3-methyl-2-oxobutanoate: step 1/4. In terms of biological role, catalyzes the condensation of the acetyl group of acetyl-CoA with 3-methyl-2-oxobutanoate (2-ketoisovalerate) to form 3-carboxy-3-hydroxy-4-methylpentanoate (2-isopropylmalate). This chain is 2-isopropylmalate synthase, found in Buchnera aphidicola subsp. Uroleucon ambrosiae.